Reading from the N-terminus, the 517-residue chain is ATP synthase subunit alpha (517 aa).

ATP is bound at residue 174–181 (GDRQTGKT).

This sequence belongs to the ATPase alpha/beta chains family. F-type ATPases have 2 components, CF(1) - the catalytic core - and CF(0) - the membrane proton channel. CF(1) has five subunits: alpha(3), beta(3), gamma(1), delta(1), epsilon(1). CF(0) has three main subunits: a(1), b(2) and c(9-12). The alpha and beta chains form an alternating ring which encloses part of the gamma chain. CF(1) is attached to CF(0) by a central stalk formed by the gamma and epsilon chains, while a peripheral stalk is formed by the delta and b chains.

It is found in the cell inner membrane. The catalysed reaction is ATP + H2O + 4 H(+)(in) = ADP + phosphate + 5 H(+)(out). Its function is as follows. Produces ATP from ADP in the presence of a proton gradient across the membrane. The alpha chain is a regulatory subunit. The polypeptide is ATP synthase subunit alpha (Polaromonas sp. (strain JS666 / ATCC BAA-500)).